A 251-amino-acid chain; its full sequence is Flap endonuclease Xni (251 aa).

The interval 51-72 (EDDRSDSWRHQSLPDYKAGRSP) is disordered. Aspartate 104 is a binding site for Mg(2+). Residues 160 to 249 (VLPHQLPDYW…LSGNLQQLRL (90 aa)) enclose the 5'-3' exonuclease domain. The K(+) site is built by leucine 171, alanine 172, proline 180, valine 182, and isoleucine 185. The segment at 184–189 (GIGAKT) is interaction with DNA.

This sequence belongs to the Xni family. Requires Mg(2+) as cofactor. The cofactor is K(+).

Functionally, has flap endonuclease activity. During DNA replication, flap endonucleases cleave the 5'-overhanging flap structure that is generated by displacement synthesis when DNA polymerase encounters the 5'-end of a downstream Okazaki fragment. The sequence is that of Flap endonuclease Xni from Yersinia enterocolitica serotype O:8 / biotype 1B (strain NCTC 13174 / 8081).